Consider the following 393-residue polypeptide: Stearoyl-[acyl-carrier-protein] 9-desaturase, chloroplastic (393 aa).

The N-terminal 30 residues, 1 to 30 (MALNFNSPTFQSIKTTRRPCSPLRSPRVFM), are a transit peptide targeting the chloroplast. Positions 135, 173, 176, 226, 259, and 262 each coordinate Fe cation.

Belongs to the fatty acid desaturase type 2 family. As to quaternary structure, homodimer. Requires Fe(2+) as cofactor.

Its subcellular location is the plastid. The protein resides in the chloroplast. The catalysed reaction is octadecanoyl-[ACP] + 2 reduced [2Fe-2S]-[ferredoxin] + O2 + 2 H(+) = (9Z)-octadecenoyl-[ACP] + 2 oxidized [2Fe-2S]-[ferredoxin] + 2 H2O. The protein operates within lipid metabolism; fatty acid metabolism. In terms of biological role, converts stearoyl-ACP to oleoyl-ACP by introduction of a cis double bond between carbons 9 and 10 of the acyl chain. This is Stearoyl-[acyl-carrier-protein] 9-desaturase, chloroplastic from Solanum commersonii (Commerson's wild potato).